A 65-amino-acid polypeptide reads, in one-letter code: Large ribosomal subunit protein bL35 (65 aa).

Basic residues-rich tracts occupy residues 1–15 and 26–44; these read MPKM…KRFT and QAFK…KRQL. A disordered region spans residues 1 to 65; the sequence is MPKMKTKKSA…KSVRAMMPYA (65 aa).

It belongs to the bacterial ribosomal protein bL35 family.

This Ralstonia nicotianae (strain ATCC BAA-1114 / GMI1000) (Ralstonia solanacearum) protein is Large ribosomal subunit protein bL35.